A 34-amino-acid chain; its full sequence is Brevinin-2Ec (34 aa).

Cysteine 28 and cysteine 34 are disulfide-bonded.

Belongs to the frog skin active peptide (FSAP) family. Brevinin subfamily. In terms of tissue distribution, expressed by the skin glands.

Its subcellular location is the secreted. In terms of biological role, shows antibacterial activity against representative Gram-negative and Gram-positive bacterial species, and hemolytic activity. In Pelophylax lessonae (Pool frog), this protein is Brevinin-2Ec.